A 295-amino-acid chain; its full sequence is Deoxyuridine 5'-triphosphate nucleotidohydrolase (295 aa).

178–180 (RSG) lines the substrate pocket. Basic and acidic residues predominate over residues 260-272 (NSVRKHTHEDNPV). The tract at residues 260–295 (NSVRKHTHEDNPVHEPNVATASADIRGTKGLGSSGF) is disordered.

Belongs to the dUTPase family. Mg(2+) serves as cofactor.

It carries out the reaction dUTP + H2O = dUMP + diphosphate + H(+). In terms of biological role, involved in nucleotide metabolism: produces dUMP, the immediate precursor of thymidine nucleotides and decreases the intracellular concentration of dUTP to avoid uracil incorporation into viral DNA. This Human herpesvirus 8 type P (isolate GK18) (HHV-8) protein is Deoxyuridine 5'-triphosphate nucleotidohydrolase.